The following is a 334-amino-acid chain: Anthranilate phosphoribosyltransferase (334 aa).

Residues glycine 79, 82–83, serine 87, 89–92, 107–115, and serine 119 each bind 5-phospho-alpha-D-ribose 1-diphosphate; these read GD, NIST, and KHGNRSISS. An anthranilate-binding site is contributed by glycine 79. Serine 91 is a binding site for Mg(2+). Asparagine 110 is a binding site for anthranilate. Arginine 165 is an anthranilate binding site. Mg(2+) contacts are provided by aspartate 224 and glutamate 225.

The protein belongs to the anthranilate phosphoribosyltransferase family. In terms of assembly, homodimer. The cofactor is Mg(2+).

The enzyme catalyses N-(5-phospho-beta-D-ribosyl)anthranilate + diphosphate = 5-phospho-alpha-D-ribose 1-diphosphate + anthranilate. It functions in the pathway amino-acid biosynthesis; L-tryptophan biosynthesis; L-tryptophan from chorismate: step 2/5. Functionally, catalyzes the transfer of the phosphoribosyl group of 5-phosphorylribose-1-pyrophosphate (PRPP) to anthranilate to yield N-(5'-phosphoribosyl)-anthranilate (PRA). The sequence is that of Anthranilate phosphoribosyltransferase from Streptococcus pneumoniae (strain ATCC 700669 / Spain 23F-1).